We begin with the raw amino-acid sequence, 312 residues long: Pantothenate kinase (312 aa).

97 to 104 (GSVAVGKS) serves as a coordination point for ATP.

It belongs to the prokaryotic pantothenate kinase family.

Its subcellular location is the cytoplasm. The enzyme catalyses (R)-pantothenate + ATP = (R)-4'-phosphopantothenate + ADP + H(+). It functions in the pathway cofactor biosynthesis; coenzyme A biosynthesis; CoA from (R)-pantothenate: step 1/5. The protein is Pantothenate kinase of Mycolicibacterium paratuberculosis (strain ATCC BAA-968 / K-10) (Mycobacterium paratuberculosis).